Consider the following 460-residue polypeptide: Argininosuccinate lyase (460 aa).

Belongs to the lyase 1 family. Argininosuccinate lyase subfamily.

The protein localises to the cytoplasm. The enzyme catalyses 2-(N(omega)-L-arginino)succinate = fumarate + L-arginine. It functions in the pathway amino-acid biosynthesis; L-arginine biosynthesis; L-arginine from L-ornithine and carbamoyl phosphate: step 3/3. This chain is Argininosuccinate lyase, found in Parvibaculum lavamentivorans (strain DS-1 / DSM 13023 / NCIMB 13966).